Here is a 670-residue protein sequence, read N- to C-terminus: Probable metal-nicotianamine transporter YSL4 (670 aa).

13 helical membrane passes run Ile35 to His55, Leu59 to Ile79, Cys107 to Met127, Gly151 to Val171, Leu273 to Ile293, Val318 to Val338, Phe389 to Phe409, Phe416 to Gly436, Gly450 to Ala470, Leu507 to Phe527, Pro559 to Ile579, Phe601 to Trp621, and Val636 to Ile656.

The protein belongs to the YSL (TC 2.A.67.2) family.

The protein resides in the membrane. Functionally, may be involved in the transport of nicotianamine-chelated metals. The sequence is that of Probable metal-nicotianamine transporter YSL4 (YSL4) from Arabidopsis thaliana (Mouse-ear cress).